Consider the following 257-residue polypeptide: TLC domain-containing protein 3A (257 aa).

7 helical membrane passes run 1–21, 42–62, 71–91, 114–134, 142–162, 181–201, and 220–240; these read MLLT…LSIW, LVSS…IISC, WLAT…FYAM, LIEN…LVPI, LGDF…FVSL, GILT…FMYW, and LHCN…FSLL. In terms of domain architecture, TLC spans 33 to 249; the sequence is DDCLTVGTRL…LCKKAARLFD (217 aa).

As to quaternary structure, interacts with GGT7 isoform 3 and SLC3A2.

Its subcellular location is the cell membrane. This is TLC domain-containing protein 3A (Tlcd3a) from Mus musculus (Mouse).